Here is a 475-residue protein sequence, read N- to C-terminus: NADH-quinone oxidoreductase subunit N 1 (475 aa).

Transmembrane regions (helical) follow at residues 8–28, 36–56, 67–87, 100–120, 122–142, 157–177, 199–219, 244–264, 268–288, 295–315, 322–342, 366–386, 403–423, and 443–463; these read VMPL…EAAT, LFAI…PSEP, GGFF…ITLI, GEYY…SAAA, LTIL…LAGI, FLLG…IYGA, FLSG…AVPF, AAAL…LETF, PTAI…AALI, MFAY…ATGT, VLYY…IIIL, AFLM…GGFI, LAVA…RVVI, and ATIA…SLLI.

The protein belongs to the complex I subunit 2 family. As to quaternary structure, NDH-1 is composed of 14 different subunits. Subunits NuoA, H, J, K, L, M, N constitute the membrane sector of the complex.

It is found in the cell inner membrane. The catalysed reaction is a quinone + NADH + 5 H(+)(in) = a quinol + NAD(+) + 4 H(+)(out). NDH-1 shuttles electrons from NADH, via FMN and iron-sulfur (Fe-S) centers, to quinones in the respiratory chain. The immediate electron acceptor for the enzyme in this species is believed to be a menaquinone. Couples the redox reaction to proton translocation (for every two electrons transferred, four hydrogen ions are translocated across the cytoplasmic membrane), and thus conserves the redox energy in a proton gradient. This chain is NADH-quinone oxidoreductase subunit N 1, found in Chloroherpeton thalassium (strain ATCC 35110 / GB-78).